A 713-amino-acid polypeptide reads, in one-letter code: Constitutive lysine decarboxylase (713 aa).

The residue at position 367 (Lys367) is an N6-(pyridoxal phosphate)lysine.

This sequence belongs to the Orn/Lys/Arg decarboxylase class-I family. Homodecamer; built of five dimers associated in a 5-fold symmetrical double-ring. Pyridoxal 5'-phosphate serves as cofactor.

It carries out the reaction L-lysine + H(+) = cadaverine + CO2. In terms of biological role, plays a role in lysine utilization by acting as a lysine decarboxylase. The protein is Constitutive lysine decarboxylase (ldcC) of Escherichia coli (strain K12).